Here is a 695-residue protein sequence, read N- to C-terminus: DNA ligase (695 aa).

Residues 44 to 48 (DAEYD), 93 to 94 (SL), and glutamate 123 each bind NAD(+). Lysine 125 serves as the catalytic N6-AMP-lysine intermediate. NAD(+) is bound by residues arginine 146, glutamate 184, lysine 300, and lysine 324. Zn(2+) contacts are provided by cysteine 418, cysteine 421, cysteine 436, and cysteine 442. The 90-residue stretch at 605–694 (SAAKPLAGIT…PDAARSMAQR (90 aa)) folds into the BRCT domain.

This sequence belongs to the NAD-dependent DNA ligase family. LigA subfamily. Mg(2+) serves as cofactor. It depends on Mn(2+) as a cofactor.

It carries out the reaction NAD(+) + (deoxyribonucleotide)n-3'-hydroxyl + 5'-phospho-(deoxyribonucleotide)m = (deoxyribonucleotide)n+m + AMP + beta-nicotinamide D-nucleotide.. Its function is as follows. DNA ligase that catalyzes the formation of phosphodiester linkages between 5'-phosphoryl and 3'-hydroxyl groups in double-stranded DNA using NAD as a coenzyme and as the energy source for the reaction. It is essential for DNA replication and repair of damaged DNA. The sequence is that of DNA ligase from Acidothermus cellulolyticus (strain ATCC 43068 / DSM 8971 / 11B).